A 502-amino-acid polypeptide reads, in one-letter code: Sodium/proline symporter (502 aa).

13 helical membrane passes run 6 to 26 (PMLV…FIAW), 42 to 62 (LGPF…WLLM), 68 to 88 (IFLS…GAWI), 127 to 147 (IISA…GIVA), 163 to 183 (ALWA…FLAV), 192 to 212 (SLMI…VGGF), 235 to 255 (FVAI…PHIL), 276 to 296 (TWMI…IAYF), 320 to 340 (ILFN…AVMS), 371 to 391 (LVWV…ALAA), 398 to 418 (LGLV…VVLF), 430 to 450 (ALAG…YGWL), and 452 to 472 (LYEI…FSLL).

This sequence belongs to the sodium:solute symporter (SSF) (TC 2.A.21) family.

It localises to the cell inner membrane. It carries out the reaction L-proline(in) + Na(+)(in) = L-proline(out) + Na(+)(out). Its function is as follows. Catalyzes the sodium-dependent uptake of extracellular L-proline. This is Sodium/proline symporter from Salmonella typhimurium (strain LT2 / SGSC1412 / ATCC 700720).